The sequence spans 282 residues: MSSHPTPSWPRRQRSEGRVALGAGLVAGGTTRLTDLAETGPLRLRLPRVEGAALEGVLLNSAGGLACGDRFAVAAEIGEGADMVLTTTAAEKIYRSDGPVTEIAAELRLGPRARLAWLPQETILYDGARLSRRLTAEIAPDAALTLFEALVFGRSARGETVREGEIRDAWRLARGGRLVYADTLRLDGAVAAHLARPAIAGGARAVATLVHAAPDAESRLDGLRGLIAAAGCAALGVEAGASAWNGLLVLRLLAPESAPLRRAATRILEGFRGLPLPRVWQT.

It belongs to the UreD family. As to quaternary structure, ureD, UreF and UreG form a complex that acts as a GTP-hydrolysis-dependent molecular chaperone, activating the urease apoprotein by helping to assemble the nickel containing metallocenter of UreC. The UreE protein probably delivers the nickel.

Its subcellular location is the cytoplasm. In terms of biological role, required for maturation of urease via the functional incorporation of the urease nickel metallocenter. In Methylobacterium sp. (strain 4-46), this protein is Urease accessory protein UreD.